The primary structure comprises 358 residues: C-X-C chemokine receptor type 4-B (358 aa).

An important for chemokine binding and signaling region spans residues 1–25; sequence MDGFSGGIDINIFDGNSTENGSGDF. Over 1–44 the chain is Extracellular; it reads MDGFSGGIDINIFDGNSTENGSGDFEDFIEPCFMQENSDFNRIF. 2 N-linked (GlcNAc...) asparagine glycosylation sites follow: N16 and N20. Disulfide bonds link C32–C281 and C113–C190. Residues 45 to 67 form a helical membrane-spanning segment; the sequence is LPTIYSFIFLLGIIGNGLVVVVM. Over 68–81 the chain is Cytoplasmic; it reads GYQKKSRTMTDKYR. The helical transmembrane segment at 82–103 threads the bilayer; it reads LHLSVADLLFVFTLPFWSVDAA. Residues 98-101 form a chemokine binding region; the sequence is WSVD. The Extracellular portion of the chain corresponds to 104–114; the sequence is IGWYFKEFLCK. A helical transmembrane segment spans residues 115–134; that stretch reads AVHVIYTVNLYSSVLILAFI. Positions 117–121 are chemokine binding; sequence HVIYT. The Cytoplasmic portion of the chain corresponds to 135 to 158; that stretch reads SLDRYLAIVHATNSQGSRKMLADK. The involved in dimerization; when bound to chemokine stretch occupies residues 139 to 151; sequence YLAIVHATNSQGS. The helical transmembrane segment at 159–178 threads the bilayer; sequence VVYAGVWLPALLLTVPDLVF. At 179-202 the chain is on the extracellular side; sequence ASVSNENGQFVCDRIYPIDNRETW. Residues 190–194 form a chemokine binding, important for signaling region; sequence CDRIY. Residues 203-223 form a helical membrane-spanning segment; it reads TVGFRFLHITVGLILPGLIIL. Topologically, residues 224–248 are cytoplasmic; sequence VCYCVIISKLSHSKGHQKRKALKTT. Residues 249–268 traverse the membrane as a helical segment; it reads VILILAFFACWLPYYVCLTT. At 269–289 the chain is on the extracellular side; sequence DTFMMLGLVKADCIWENTLHK. The chain crosses the membrane as a helical span at residues 290 to 309; the sequence is AISITEALAFFHCCLNPILY. The Cytoplasmic portion of the chain corresponds to 310-358; the sequence is AFLGAKFKKSAQNAFTSVSRGSSLKILSKKRAGLSSVSTESESSSFHSS. The disordered stretch occupies residues 338-358; that stretch reads KKRAGLSSVSTESESSSFHSS. Residues 344-358 are compositionally biased toward low complexity; that stretch reads SSVSTESESSSFHSS.

This sequence belongs to the G-protein coupled receptor 1 family. In terms of assembly, monomer. Can form dimers. In terms of processing, sulfation is required for efficient binding of cxcl12/sdf-1alpha and promotes its dimerization. Post-translationally, O- and N-glycosylated.

The protein resides in the cell membrane. It is found in the cytoplasm. Its subcellular location is the nucleus. It localises to the early endosome. The protein localises to the late endosome. The protein resides in the lysosome. Receptor for the C-X-C chemokine cxcl12/sdf-1. Transduces a signal by increasing the intracellular level of calcium ions. Signaling with cxcl12/sdf-1 mediates the directional movement of mesodermal cells during gastrulation. May play a role in the migration of embryonic presumptive primordial germ cells (pPGCs). May also be involved in regulating migration of hematopoietic stem cells into the larval liver. The protein is C-X-C chemokine receptor type 4-B (cxcr4-b) of Xenopus laevis (African clawed frog).